The chain runs to 179 residues: MKLIILDRDGVVNQDSDAFVKSPDEWIALPGSLQAIARLTQADWTVVLATNQSGLARGLFDTATLNAIHDKMHRALAQMGGVVDAIFMCPHGPDDGCACRKPLPGMYRDIARRYDVDLAGVPAVGDSLRDLQAAAQAGCAPWLVQTGNGRKTLAQGGLPEGTRVCEDLAAVAEQLLQEA.

Aspartate 7 serves as the catalytic Nucleophile. Aspartate 7 and aspartate 9 together coordinate Mg(2+). Residue aspartate 7 coordinates substrate. The Proton donor role is filled by aspartate 9. Substrate-binding positions include 15 to 19 (DSDAF), 50 to 53 (TNQS), and arginine 57. Zn(2+)-binding residues include cysteine 89, histidine 91, cysteine 97, and cysteine 99. A substrate-binding site is contributed by arginine 100. Aspartate 126 contributes to the Mg(2+) binding site. Arginine 129 provides a ligand contact to substrate.

As to quaternary structure, monomer. Mg(2+) serves as cofactor. It depends on Zn(2+) as a cofactor.

The protein localises to the cytoplasm. It carries out the reaction D-glycero-beta-D-manno-heptose 1,7-bisphosphate + H2O = D-glycero-beta-D-manno-heptose 1-phosphate + phosphate. The protein operates within nucleotide-sugar biosynthesis; ADP-L-glycero-beta-D-manno-heptose biosynthesis; ADP-L-glycero-beta-D-manno-heptose from D-glycero-beta-D-manno-heptose 7-phosphate: step 2/4. It functions in the pathway bacterial outer membrane biogenesis; LPS core biosynthesis. Functionally, converts the D-glycero-beta-D-manno-heptose 1,7-bisphosphate (beta-HBP) intermediate into D-glycero-beta-D-manno-heptose 1-phosphate by removing the phosphate group at the C-7 position. The sequence is that of D-glycero-beta-D-manno-heptose-1,7-bisphosphate 7-phosphatase from Bordetella bronchiseptica (strain ATCC BAA-588 / NCTC 13252 / RB50) (Alcaligenes bronchisepticus).